A 485-amino-acid polypeptide reads, in one-letter code: GTPase Obg (485 aa).

Residues methionine 1–leucine 159 enclose the Obg domain. The OBG-type G domain maps to alanine 160–phenylalanine 332. GTP-binding positions include glycine 166–serine 173, phenylalanine 191–valine 195, aspartate 213–glycine 216, asparagine 284–aspartate 287, and serine 313–alanine 315. Residues serine 173 and threonine 193 each contribute to the Mg(2+) site. 4 stretches are compositionally biased toward low complexity: residues alanine 367–lysine 385, arginine 394–lysine 428, arginine 437–lysine 446, and arginine 455–arginine 474. The segment at alanine 367–serine 485 is disordered.

It belongs to the TRAFAC class OBG-HflX-like GTPase superfamily. OBG GTPase family. In terms of assembly, monomer. The cofactor is Mg(2+).

The protein localises to the cytoplasm. In terms of biological role, an essential GTPase which binds GTP, GDP and possibly (p)ppGpp with moderate affinity, with high nucleotide exchange rates and a fairly low GTP hydrolysis rate. Plays a role in control of the cell cycle, stress response, ribosome biogenesis and in those bacteria that undergo differentiation, in morphogenesis control. The chain is GTPase Obg from Myxococcus xanthus (strain DK1622).